Here is a 387-residue protein sequence, read N- to C-terminus: 3-ketoacyl-CoA thiolase (387 aa).

The active-site Acyl-thioester intermediate is cysteine 91. Active-site proton acceptor residues include histidine 343 and cysteine 373.

It belongs to the thiolase-like superfamily. Thiolase family. As to quaternary structure, heterotetramer of two alpha chains (FadB) and two beta chains (FadA).

Its subcellular location is the cytoplasm. It catalyses the reaction an acyl-CoA + acetyl-CoA = a 3-oxoacyl-CoA + CoA. It participates in lipid metabolism; fatty acid beta-oxidation. Catalyzes the final step of fatty acid oxidation in which acetyl-CoA is released and the CoA ester of a fatty acid two carbons shorter is formed. The polypeptide is 3-ketoacyl-CoA thiolase (Photobacterium profundum (strain SS9)).